The following is a 304-amino-acid chain: Ribosomal protein L11 methyltransferase (304 aa).

S-adenosyl-L-methionine contacts are provided by threonine 152, glycine 173, aspartate 195, and asparagine 234.

The protein belongs to the methyltransferase superfamily. PrmA family.

The protein localises to the cytoplasm. It catalyses the reaction L-lysyl-[protein] + 3 S-adenosyl-L-methionine = N(6),N(6),N(6)-trimethyl-L-lysyl-[protein] + 3 S-adenosyl-L-homocysteine + 3 H(+). Functionally, methylates ribosomal protein L11. This Cupriavidus metallidurans (strain ATCC 43123 / DSM 2839 / NBRC 102507 / CH34) (Ralstonia metallidurans) protein is Ribosomal protein L11 methyltransferase.